A 251-amino-acid chain; its full sequence is Segregation and condensation protein A (251 aa).

It belongs to the ScpA family. Component of a cohesin-like complex composed of ScpA, ScpB and the Smc homodimer, in which ScpA and ScpB bind to the head domain of Smc. The presence of the three proteins is required for the association of the complex with DNA.

The protein localises to the cytoplasm. Participates in chromosomal partition during cell division. May act via the formation of a condensin-like complex containing Smc and ScpB that pull DNA away from mid-cell into both cell halves. This Exiguobacterium sibiricum (strain DSM 17290 / CCUG 55495 / CIP 109462 / JCM 13490 / 255-15) protein is Segregation and condensation protein A.